The sequence spans 114 residues: Iron-sulfur cluster insertion protein ErpA (114 aa).

3 residues coordinate iron-sulfur cluster: Cys-42, Cys-106, and Cys-108.

This sequence belongs to the HesB/IscA family. In terms of assembly, homodimer. Iron-sulfur cluster serves as cofactor.

In terms of biological role, required for insertion of 4Fe-4S clusters for at least IspG. This chain is Iron-sulfur cluster insertion protein ErpA, found in Pseudoalteromonas atlantica (strain T6c / ATCC BAA-1087).